The following is a 163-amino-acid chain: Endoribonuclease YbeY (163 aa).

The Zn(2+) site is built by His129, His133, and His139.

It belongs to the endoribonuclease YbeY family. The cofactor is Zn(2+).

It is found in the cytoplasm. In terms of biological role, single strand-specific metallo-endoribonuclease involved in late-stage 70S ribosome quality control and in maturation of the 3' terminus of the 16S rRNA. The sequence is that of Endoribonuclease YbeY from Picosynechococcus sp. (strain ATCC 27264 / PCC 7002 / PR-6) (Agmenellum quadruplicatum).